Here is a 1793-residue protein sequence, read N- to C-terminus: Transposon Ty1-H Gag-Pol polyprotein (1793 aa).

3 stretches are compositionally biased toward polar residues: residues 1–10 (MESQQLSNYP), 48–60 (TKANSQQTTTPAS), and 127–152 (QSQFPQYPSSVGTPLSTPSPESGNTF). Disordered regions lie at residues 1–84 (MESQ…QNGP), 126–174 (PQSQ…PPPM), and 390–459 (GSRN…SKST). Over residues 153–165 (TDSSSADSDMTST) the composition is skewed to low complexity. The RNA-binding stretch occupies residues 337 to 439 (NNGIHINNKV…NSKSKTARAH (103 aa)). Over residues 440–456 (NVSTSNNSPSTDNDSIS) the composition is skewed to low complexity. The active-site For protease activity; shared with dimeric partner is D499. The tract at residues 621–678 (NVHTSESTRKYPYPFIHRMLAHANAQTIRYSLKNNTITYFNESDVDWSSAIDYQCPDC) is integrase-type zinc finger-like. The Integrase catalytic domain occupies 698–873 (NSYEPFQYLH…AGLDISTLLP (176 aa)). Mg(2+) contacts are provided by D709 and D774. The tract at residues 996-1208 (AVSPTDSTPP…SSLGGIGDSN (213 aa)) is disordered. Low complexity predominate over residues 998-1007 (SPTDSTPPST). A compositionally biased stretch (polar residues) spans 1043–1053 (STPQISDIEST). Basic and acidic residues predominate over residues 1076–1091 (ESSHASKSKDFRHSDS). Composition is skewed to polar residues over residues 1092–1120 (YSDNETNHTNVPISSTGGTNNKTVPQTSE) and 1133–1144 (SIDTSSSESNSL). A Bipartite nuclear localization signal motif is present at residues 1216–1250 (KKRSLEDNETEIKVSRDTWNTKNMRSLEPPRSKKR). The Reverse transcriptase Ty1/copia-type domain occupies 1376 to 1514 (NNYYITQLDI…DILGLEIKYQ (139 aa)). The Mg(2+) site is built by D1384, D1465, D1466, D1648, E1690, and D1723. An RNase H Ty1/copia-type domain is found at 1648–1790 (DASYGNQPYY…IKTFKLLTNK (143 aa)).

As to quaternary structure, the capsid protein forms a homotrimer, from which the VLPs are assembled. The protease is a homodimer, whose active site consists of two apposed aspartic acid residues. Initially, virus-like particles (VLPs) are composed of the structural unprocessed proteins Gag and Gag-Pol, and also contain the host initiator methionine tRNA (tRNA(i)-Met) which serves as a primer for minus-strand DNA synthesis, and a dimer of genomic Ty RNA. Processing of the polyproteins occurs within the particle and proceeds by an ordered pathway, called maturation. First, the protease (PR) is released by autocatalytic cleavage of the Gag-Pol polyprotein yielding capsid protein p45 and a Pol-p154 precursor protein. This cleavage is a prerequisite for subsequent processing of Pol-p154 at the remaining sites to release the mature structural and catalytic proteins. Maturation takes place prior to the RT reaction and is required to produce transposition-competent VLPs.

The protein localises to the cytoplasm. It localises to the nucleus. The enzyme catalyses DNA(n) + a 2'-deoxyribonucleoside 5'-triphosphate = DNA(n+1) + diphosphate. It carries out the reaction Endonucleolytic cleavage to 5'-phosphomonoester.. Functionally, capsid protein (CA) is the structural component of the virus-like particle (VLP), forming the shell that encapsulates the retrotransposons dimeric RNA genome. The particles are assembled from trimer-clustered units and there are holes in the capsid shells that allow for the diffusion of macromolecules. CA also has nucleocapsid-like chaperone activity, promoting primer tRNA(i)-Met annealing to the multipartite primer-binding site (PBS), dimerization of Ty1 RNA and initiation of reverse transcription. The aspartyl protease (PR) mediates the proteolytic cleavages of the Gag and Gag-Pol polyproteins after assembly of the VLP. In terms of biological role, reverse transcriptase/ribonuclease H (RT) is a multifunctional enzyme that catalyzes the conversion of the retro-elements RNA genome into dsDNA within the VLP. The enzyme displays a DNA polymerase activity that can copy either DNA or RNA templates, and a ribonuclease H (RNase H) activity that cleaves the RNA strand of RNA-DNA heteroduplexes during plus-strand synthesis and hydrolyzes RNA primers. The conversion leads to a linear dsDNA copy of the retrotransposon that includes long terminal repeats (LTRs) at both ends. Its function is as follows. Integrase (IN) targets the VLP to the nucleus, where a subparticle preintegration complex (PIC) containing at least integrase and the newly synthesized dsDNA copy of the retrotransposon must transit the nuclear membrane. Once in the nucleus, integrase performs the integration of the dsDNA into the host genome. The protein is Transposon Ty1-H Gag-Pol polyprotein (TY1B-H) of Saccharomyces cerevisiae (strain ATCC 204508 / S288c) (Baker's yeast).